We begin with the raw amino-acid sequence, 279 residues long: Pantothenate synthetase (279 aa).

26–33 is a binding site for ATP; sequence MGNLHEGH. The Proton donor role is filled by His33. Gln57 contacts (R)-pantoate. Gln57 is a binding site for beta-alanine. ATP is bound at residue 144-147; it reads GKKD. A (R)-pantoate-binding site is contributed by Gln150. ATP is bound by residues Val173 and 181-184; that span reads LSSR.

This sequence belongs to the pantothenate synthetase family. Homodimer.

The protein resides in the cytoplasm. The catalysed reaction is (R)-pantoate + beta-alanine + ATP = (R)-pantothenate + AMP + diphosphate + H(+). It functions in the pathway cofactor biosynthesis; (R)-pantothenate biosynthesis; (R)-pantothenate from (R)-pantoate and beta-alanine: step 1/1. Functionally, catalyzes the condensation of pantoate with beta-alanine in an ATP-dependent reaction via a pantoyl-adenylate intermediate. In Burkholderia thailandensis (strain ATCC 700388 / DSM 13276 / CCUG 48851 / CIP 106301 / E264), this protein is Pantothenate synthetase.